Consider the following 266-residue polypeptide: Small ribosomal subunit protein uS2 (266 aa).

The protein belongs to the universal ribosomal protein uS2 family.

This Corynebacterium diphtheriae (strain ATCC 700971 / NCTC 13129 / Biotype gravis) protein is Small ribosomal subunit protein uS2.